The sequence spans 101 residues: Small ribosomal subunit protein uS10 (101 aa).

Belongs to the universal ribosomal protein uS10 family. In terms of assembly, part of the 30S ribosomal subunit.

In terms of biological role, involved in the binding of tRNA to the ribosomes. The chain is Small ribosomal subunit protein uS10 from Christiangramia forsetii (strain DSM 17595 / CGMCC 1.15422 / KT0803) (Gramella forsetii).